The chain runs to 872 residues: Telomerase component p95 (872 aa).

Disordered regions lie at residues 55-75 and 471-492; these read NQDQ…NSNK and KNNK…ESTS. The span at 474–486 shows a compositional bias: basic and acidic residues; that stretch reads KNQEETPETKDET.

As to quaternary structure, telomerase consist of two subunit, p80 and p95 that form a 1:1:1 complex with the 159 nt telomerase RNA.

The protein localises to the nucleus. The protein resides in the chromosome. It is found in the telomere. The enzyme catalyses DNA(n) + a 2'-deoxyribonucleoside 5'-triphosphate = DNA(n+1) + diphosphate. Functionally, ribonucleoprotein DNA polymerase that catalyzes the de novo synthesis of telomeric simple sequence repeats. Subunit p95 contains some or all of the template-independent primer DNA-binding site termed the anchor site. This chain is Telomerase component p95, found in Tetrahymena thermophila.